The chain runs to 205 residues: Probable DNA-binding protein (205 aa).

The tract at residues 140–168 (GEGDGAPRPACPDFSTRGAETGNQGVQPG) is disordered.

The protein is Probable DNA-binding protein of Homo sapiens (Human).